The primary structure comprises 115 residues: Nucleoid-associated protein NATL1_00191 (115 aa).

Residues 89–115 (STSTMKERMEDLTGGFKLNLPGMGEES) are disordered.

Belongs to the YbaB/EbfC family. In terms of assembly, homodimer.

The protein resides in the cytoplasm. It is found in the nucleoid. Its function is as follows. Binds to DNA and alters its conformation. May be involved in regulation of gene expression, nucleoid organization and DNA protection. The protein is Nucleoid-associated protein NATL1_00191 of Prochlorococcus marinus (strain NATL1A).